A 218-amino-acid chain; its full sequence is ATP phosphoribosyltransferase (218 aa).

It belongs to the ATP phosphoribosyltransferase family. Short subfamily. As to quaternary structure, heteromultimer composed of HisG and HisZ subunits.

The protein resides in the cytoplasm. It catalyses the reaction 1-(5-phospho-beta-D-ribosyl)-ATP + diphosphate = 5-phospho-alpha-D-ribose 1-diphosphate + ATP. It functions in the pathway amino-acid biosynthesis; L-histidine biosynthesis; L-histidine from 5-phospho-alpha-D-ribose 1-diphosphate: step 1/9. Its function is as follows. Catalyzes the condensation of ATP and 5-phosphoribose 1-diphosphate to form N'-(5'-phosphoribosyl)-ATP (PR-ATP). Has a crucial role in the pathway because the rate of histidine biosynthesis seems to be controlled primarily by regulation of HisG enzymatic activity. The sequence is that of ATP phosphoribosyltransferase from Synechococcus elongatus (strain ATCC 33912 / PCC 7942 / FACHB-805) (Anacystis nidulans R2).